Consider the following 72-residue polypeptide: Exodeoxyribonuclease 7 small subunit (72 aa).

Belongs to the XseB family. In terms of assembly, heterooligomer composed of large and small subunits.

It is found in the cytoplasm. The enzyme catalyses Exonucleolytic cleavage in either 5'- to 3'- or 3'- to 5'-direction to yield nucleoside 5'-phosphates.. Functionally, bidirectionally degrades single-stranded DNA into large acid-insoluble oligonucleotides, which are then degraded further into small acid-soluble oligonucleotides. This Chlamydia trachomatis serovar D (strain ATCC VR-885 / DSM 19411 / UW-3/Cx) protein is Exodeoxyribonuclease 7 small subunit.